A 563-amino-acid polypeptide reads, in one-letter code: MSSGSRVRGPNSALTEFLRSQGINASALGRARPPRQSEESAGQSTGTESEVIQTPTSVEENNEDENSMSTTTIEIPVVKRRNLRNQKKKKKTDEEAEDNEDTFSMNSRAGFSYKAREHTGKLDFCAHCNCRFTITPYSKYSNSEKGWLCYPCSRGAEDRSVPELRTRKRKALTRKKVAAATMDEEISVPKLQDLCIRVIAEYINDIEAFGDIGQVNMDKISQIISKNRSLNDTTVKLFLSGGQTELKLYDCSKITADSLFQIAQYCPNLQTLHLTYCGQMQDQVLHFYADHLTELTDVSFQGAFLVSSSEWINFFKKRGSKLISLELTDTARIHVSVINAIVDCCPNLISLNLSRIFYLDDECVRLLAGCRNLVSLKIESPGGIINDGSILDVLNQIGSGLHTLSLSGCTKLTDEVLKQGIGPCCGRLKHLNLSGLELLTDDEASIVFGEWKIQSGLETLSLRRCLSLGDKTVRAVLVNSGHTLRTLDLNGMSFVTDEALQYIVNFPLPMLKALDVSWIRGMNDKLVCDFESKKPTLEKLLVWGDNHVLMPSNRLLLIGREVQ.

Positions 1–101 (MSSGSRVRGP…TDEEAEDNED (101 aa)) are disordered. Positions 39–59 (ESAGQSTGTESEVIQTPTSVE) are enriched in polar residues. Basic residues predominate over residues 78–90 (VKRRNLRNQKKKK).

Belongs to the RAD7 family.

The protein resides in the nucleus. In terms of biological role, involved in global genome repair (GGR) via nucleotide excision repair (NER), in conjunction with rhp16, after UV irradiation. The polypeptide is DNA repair protein rhp7 (rhp7) (Schizosaccharomyces pombe (strain 972 / ATCC 24843) (Fission yeast)).